The chain runs to 74 residues: uncharacterized protein (74 aa).

This is an uncharacterized protein from Escherichia coli (strain K12).